We begin with the raw amino-acid sequence, 595 residues long: RuBisCO large subunit-binding protein subunit beta, chloroplastic (595 aa).

The N-terminal 49 residues, 1-49 (MASTFSATTSSCNLSSSAAISSFPLAAGKRNANKVVLPRKNRNVKVSAM), are a transit peptide targeting the chloroplast.

Belongs to the chaperonin (HSP60) family. Oligomer of probably six alpha and six beta subunits.

It is found in the plastid. It localises to the chloroplast. In terms of biological role, this protein binds RuBisCO small and large subunits and is implicated in the assembly of the enzyme oligomer. The sequence is that of RuBisCO large subunit-binding protein subunit beta, chloroplastic from Pisum sativum (Garden pea).